The following is a 383-amino-acid chain: UDP-D-xylose:L-fucose alpha-1,3-D-xylosyltransferase 3 (383 aa).

Residues 1 to 20 (MAQQSQRPISNRHISLLNRN) are Cytoplasmic-facing. The chain crosses the membrane as a helical; Signal-anchor for type II membrane protein span at residues 21-41 (GLILLLLLALFVILGVFLPLT). Over 42-383 (KSSLFMFPNT…KNRGKKHKLP (342 aa)) the chain is Lumenal. N-linked (GlcNAc...) asparagine glycosylation is found at Asn-50, Asn-82, and Asn-157. Residues 180 to 182 (DVD) carry the DXD motif motif. Residues Asn-212, Asn-258, Asn-301, Asn-306, Asn-357, and Asn-364 are each glycosylated (N-linked (GlcNAc...) asparagine).

It belongs to the glycosyltransferase 77 family. Mn(2+) serves as cofactor. It depends on Mg(2+) as a cofactor. Glycosylated. Expressed around trichome support cells in the adaxial epidermis of rosette leaves, in cauline leaves, petals and both the proximal and distal ends of siliques.

The protein localises to the golgi apparatus membrane. Catalyzes the transfer of D-xylose from UDP-alpha-D-xylose onto L-fucose. Probably involved in the biosynthesis of rhamnogalacturonan II (RG-II) through xylosylation of the internal fucose moiety of the A-chain of RG-II, a structurally complex pectic polysaccharide of the primary cell wall. RG-II is essential for the cell wall integrity of rapidly growing tissues such as roots and pollen tube growth and elongation. The sequence is that of UDP-D-xylose:L-fucose alpha-1,3-D-xylosyltransferase 3 from Arabidopsis thaliana (Mouse-ear cress).